The chain runs to 164 residues: Pleckstrin homology domain-containing family J member 1 (164 aa).

A PH domain is found at 15–108; sequence PAEMAAELGM…WMEALQRASY (94 aa).

The protein is Pleckstrin homology domain-containing family J member 1 (Plekhj1) of Mus musculus (Mouse).